We begin with the raw amino-acid sequence, 331 residues long: Probable serine hydrolase (331 aa).

The disordered stretch occupies residues 1–28 (MGQTRVAATTAAQSPAAELSPETNGQTE). A compositionally biased stretch (low complexity) spans 7 to 17 (AATTAAQSPAA). An AB hydrolase-1 domain is found at 63–163 (PIIALHGWQD…EVEKLINIDI (101 aa)). Residue S138 is part of the active site.

Belongs to the AB hydrolase superfamily. As to expression, ubiquitously expressed before embryonic stage 11. At stage 11, expression is concentrated in the foregut and posterior midgut. By stage 15, in gastric caeca, pharynx, posterior spiracles and anterior edge of midgut. At the end of embryogenesis, expression is confined to gastric caeca. During third instar larvae, expressed at low levels in gastric caeca, midgut and hindgut and high level in fat body.

In terms of biological role, may have a role in detoxification and digestion during embryogenesis and larval development. The polypeptide is Probable serine hydrolase (kraken) (Drosophila melanogaster (Fruit fly)).